We begin with the raw amino-acid sequence, 125 residues long: Small ribosomal subunit protein uS13 (125 aa).

A disordered region spans residues 95 to 125 (GLPLRGQRTKTNARTRKGKRKTVANKKIASK).

Belongs to the universal ribosomal protein uS13 family. As to quaternary structure, part of the 30S ribosomal subunit. Forms a loose heterodimer with protein S19. Forms two bridges to the 50S subunit in the 70S ribosome.

In terms of biological role, located at the top of the head of the 30S subunit, it contacts several helices of the 16S rRNA. In the 70S ribosome it contacts the 23S rRNA (bridge B1a) and protein L5 of the 50S subunit (bridge B1b), connecting the 2 subunits; these bridges are implicated in subunit movement. Contacts the tRNAs in the A and P-sites. In Borrelia garinii subsp. bavariensis (strain ATCC BAA-2496 / DSM 23469 / PBi) (Borreliella bavariensis), this protein is Small ribosomal subunit protein uS13.